A 350-amino-acid polypeptide reads, in one-letter code: Adenine deaminase (350 aa).

The Zn(2+) site is built by H24, H26, and H207. Catalysis depends on E210, which acts as the Proton donor. Residue D288 coordinates Zn(2+). D289 lines the substrate pocket.

It belongs to the metallo-dependent hydrolases superfamily. Adenosine and AMP deaminases family. Adenine deaminase type 2 subfamily. It depends on Zn(2+) as a cofactor.

It catalyses the reaction adenine + H2O + H(+) = hypoxanthine + NH4(+). In terms of biological role, catalyzes the hydrolytic deamination of adenine to hypoxanthine. Plays an important role in the purine salvage pathway and in nitrogen catabolism. This is Adenine deaminase from Paraburkholderia phytofirmans (strain DSM 17436 / LMG 22146 / PsJN) (Burkholderia phytofirmans).